We begin with the raw amino-acid sequence, 230 residues long: 2,3-bisphosphoglycerate-dependent phosphoglycerate mutase (230 aa).

Substrate contacts are provided by residues 8 to 15 (RHGESEWN), 21 to 22 (TG), arginine 60, 87 to 90 (ERHY), lysine 98, 114 to 115 (RR), and 183 to 184 (GN). The Tele-phosphohistidine intermediate role is filled by histidine 9. Glutamate 87 (proton donor/acceptor) is an active-site residue.

The protein belongs to the phosphoglycerate mutase family. BPG-dependent PGAM subfamily.

It catalyses the reaction (2R)-2-phosphoglycerate = (2R)-3-phosphoglycerate. The protein operates within carbohydrate degradation; glycolysis; pyruvate from D-glyceraldehyde 3-phosphate: step 3/5. Functionally, catalyzes the interconversion of 2-phosphoglycerate and 3-phosphoglycerate. The polypeptide is 2,3-bisphosphoglycerate-dependent phosphoglycerate mutase (Streptococcus uberis (strain ATCC BAA-854 / 0140J)).